Consider the following 122-residue polypeptide: Large ribosomal subunit protein bL12 (122 aa).

This sequence belongs to the bacterial ribosomal protein bL12 family. As to quaternary structure, homodimer. Part of the ribosomal stalk of the 50S ribosomal subunit. Forms a multimeric L10(L12)X complex, where L10 forms an elongated spine to which 2 to 4 L12 dimers bind in a sequential fashion. Binds GTP-bound translation factors.

Forms part of the ribosomal stalk which helps the ribosome interact with GTP-bound translation factors. Is thus essential for accurate translation. The sequence is that of Large ribosomal subunit protein bL12 from Mesoplasma florum (strain ATCC 33453 / NBRC 100688 / NCTC 11704 / L1) (Acholeplasma florum).